The following is a 435-amino-acid chain: 3-phosphoshikimate 1-carboxyvinyltransferase (435 aa).

3-phosphoshikimate is bound by residues Lys23, Ser24, and Arg28. Lys23 is a binding site for phosphoenolpyruvate. Positions 97 and 125 each coordinate phosphoenolpyruvate. 3-phosphoshikimate contacts are provided by Ser170, Ser171, Gln172, Ser198, Asp314, Asn338, and Lys342. Residue Gln172 participates in phosphoenolpyruvate binding. Asp314 serves as the catalytic Proton acceptor. Arg346, Arg388, and Lys413 together coordinate phosphoenolpyruvate.

This sequence belongs to the EPSP synthase family. In terms of assembly, monomer.

The protein localises to the cytoplasm. The enzyme catalyses 3-phosphoshikimate + phosphoenolpyruvate = 5-O-(1-carboxyvinyl)-3-phosphoshikimate + phosphate. It participates in metabolic intermediate biosynthesis; chorismate biosynthesis; chorismate from D-erythrose 4-phosphate and phosphoenolpyruvate: step 6/7. Functionally, catalyzes the transfer of the enolpyruvyl moiety of phosphoenolpyruvate (PEP) to the 5-hydroxyl of shikimate-3-phosphate (S3P) to produce enolpyruvyl shikimate-3-phosphate and inorganic phosphate. This is 3-phosphoshikimate 1-carboxyvinyltransferase from Sodalis glossinidius (strain morsitans).